The following is a 181-amino-acid chain: uncharacterized protein (181 aa).

Residues 1–22 (MNKKSLLVVLVIALAVVPFAAT) form the signal peptide.

This is an uncharacterized protein from Halorubrum pleomorphic virus 1 (HRPV-1).